Consider the following 157-residue polypeptide: Lipoprotein signal peptidase (157 aa).

3 helical membrane-spanning segments follow: residues 10–30 (LVFM…KYAI), 58–78 (FLEG…FIFL), and 84–104 (LFKN…SNVL). Active-site residues include D114 and D131. The chain crosses the membrane as a helical span at residues 122-142 (FDFAIFNFADVMIDVGVGVLL).

It belongs to the peptidase A8 family.

The protein localises to the cell inner membrane. It carries out the reaction Release of signal peptides from bacterial membrane prolipoproteins. Hydrolyzes -Xaa-Yaa-Zaa-|-(S,diacylglyceryl)Cys-, in which Xaa is hydrophobic (preferably Leu), and Yaa (Ala or Ser) and Zaa (Gly or Ala) have small, neutral side chains.. The protein operates within protein modification; lipoprotein biosynthesis (signal peptide cleavage). Functionally, this protein specifically catalyzes the removal of signal peptides from prolipoproteins. The sequence is that of Lipoprotein signal peptidase from Helicobacter pylori (strain ATCC 700392 / 26695) (Campylobacter pylori).